Here is a 396-residue protein sequence, read N- to C-terminus: 12-oxophytodienoate reductase 3 (396 aa).

FMN is bound by residues 31–33 (PMT), glycine 64, and glutamine 106. 185–188 (HGAH) is a substrate binding site. The active-site Proton donor is tyrosine 190. Arginine 237 contributes to the FMN binding site. Arginine 283 contacts substrate. Residues glycine 321 and 342–343 (GR) contribute to the FMN site. Positions 342–343 (GR) are FMN. Residues 394–396 (SRL) carry the Microbody targeting signal motif.

This sequence belongs to the NADH:flavin oxidoreductase/NADH oxidase family. FMN serves as cofactor. As to expression, expressed in roots and to a lower extent in leaves and flowers.

It localises to the peroxisome. It catalyses the reaction (1S,2S)-OPC-8 + NADP(+) = (9S,13S,15Z)-12-oxophyto-10,15-dienoate + NADPH + H(+). Its pathway is lipid metabolism; oxylipin biosynthesis. Functionally, specifically cleaves olefinic bonds in cyclic enones. Involved in the biosynthesis of jasmonic acid (JA) and perhaps in biosynthesis or metabolism of other oxylipin signaling moleclules. It is required for the spatial and temporal regulation of JA levels during dehiscence of anthers, promoting the stomium degeneration program. In vitro, reduces 9S,13S-12-oxophytodienoic acid (9S,13S-OPDA) and 9R,13R-OPDA to 9S,13S-OPC-8:0 and 9R,13R-OPC-8:0, respectively. In Solanum lycopersicum (Tomato), this protein is 12-oxophytodienoate reductase 3 (OPR3).